Here is a 374-residue protein sequence, read N- to C-terminus: Aminodeoxychorismate lyase (374 aa).

It belongs to the class-IV pyridoxal-phosphate-dependent aminotransferase family. Homodimer. Pyridoxal 5'-phosphate serves as cofactor.

The protein resides in the cytoplasm. It carries out the reaction 4-amino-4-deoxychorismate = 4-aminobenzoate + pyruvate + H(+). It functions in the pathway cofactor biosynthesis; tetrahydrofolate biosynthesis; 4-aminobenzoate from chorismate: step 2/2. Functionally, converts 4-amino-4-deoxychorismate into 4-aminobenzoate (PABA) and pyruvate. The sequence is that of Aminodeoxychorismate lyase (ABZ2) from Saccharomyces cerevisiae (strain ATCC 204508 / S288c) (Baker's yeast).